The chain runs to 179 residues: Large ribosomal subunit protein uL5 (179 aa).

The protein belongs to the universal ribosomal protein uL5 family. Part of the 50S ribosomal subunit; part of the 5S rRNA/L5/L18/L25 subcomplex. Contacts the 5S rRNA and the P site tRNA. Forms a bridge to the 30S subunit in the 70S ribosome.

Its function is as follows. This is one of the proteins that bind and probably mediate the attachment of the 5S RNA into the large ribosomal subunit, where it forms part of the central protuberance. In the 70S ribosome it contacts protein S13 of the 30S subunit (bridge B1b), connecting the 2 subunits; this bridge is implicated in subunit movement. Contacts the P site tRNA; the 5S rRNA and some of its associated proteins might help stabilize positioning of ribosome-bound tRNAs. The polypeptide is Large ribosomal subunit protein uL5 (Histophilus somni (strain 129Pt) (Haemophilus somnus)).